The chain runs to 405 residues: Amino acid transporter AVT1I (405 aa).

Helical transmembrane passes span 22 to 42 (CFNA…YSLA), 46 to 66 (WLSL…SLLI), 93 to 113 (IIVS…FLIL), 140 to 160 (FMAT…LSVL), 169 to 189 (LATT…GIGF), 201 to 221 (IPTA…LPTL), 234 to 254 (VLLI…VLGY), 278 to 298 (VAIY…ITPT), 318 to 338 (LLIS…LPFF), 343 to 363 (SLVG…LCYL), and 377 to 397 (IMLF…TYIA).

This sequence belongs to the amino acid/polyamine transporter 2 family. Amino acid/auxin permease (AAAP) (TC 2.A.18.5) subfamily.

It is found in the membrane. The protein is Amino acid transporter AVT1I of Arabidopsis thaliana (Mouse-ear cress).